The primary structure comprises 365 residues: Pyridoxal reductase, chloroplastic (365 aa).

Residues methionine 1–asparagine 15 constitute a chloroplast transit peptide. The active-site Proton donor is the tyrosine 94.

Belongs to the aldo/keto reductase family. As to quaternary structure, monomer. Expressed in cotyledons, embryos, flowers, shoots, roots and seeds.

The protein localises to the plastid. Its subcellular location is the chloroplast. The enzyme catalyses pyridoxine + NADP(+) = pyridoxal + NADPH + H(+). It functions in the pathway cofactor degradation; B6 vitamer degradation; pyridoxal from pyridoxine (dehydrogenase route): step 1/1. Its function is as follows. Catalyzes the reduction of pyridoxal (PL) with NADPH and oxidation of pyridoxine (PN) with NADP(+). Involved in the PLP salvage pathway. The polypeptide is Pyridoxal reductase, chloroplastic (PLR1) (Arabidopsis thaliana (Mouse-ear cress)).